A 496-amino-acid polypeptide reads, in one-letter code: MSNTKIRVRFCPSPTGTPHVGLIRTALFNWAYARHCGGDFVFRIEDTDAGRDSEESYLAILDALRWLGLDWDEGPEVGGPYEPYRQSQRKELHREVVRKLLEAGEAYEAFSTAEEVEARHLAAGRNPKLGYDNYDRDLTEEQRAAFRAEGRDPVVRLRMPDHDITWNDLVRGETTFAAGVVPDFALTRGNGDPLYTLVNPVDDALMKITHVLRGEDLLPSTPRQIALYEAMIRIGVTDSIPAFAHLPSVLGEGTKKLSKRDPQSNLFLHRDRGFIPEGLLNYLALLGWSIADDHDIFSLAEMVTAFDVTDVNSNPARFDQKKADAINAEHIRLLAPEEFVTRLRTYFAAHGHELGLDESAFAVAADLVQTRIVVLGDAWGLLKFLNDDAYAIDPGAARKELGEASLPVLDAAIGALESLEAWTTPAIEGALKSALIEGLELKPRKAFGPLRVAVTGATVSPPLFESMELLGSGRTLTRLRNARSWENGVGDQTDSG.

The short motif at 12–22 (PSPTGTPHVGL) is the 'HIGH' region element. The 'KMSKS' region signature appears at 256–260 (KLSKR). Lys259 contacts ATP.

It belongs to the class-I aminoacyl-tRNA synthetase family. Glutamate--tRNA ligase type 1 subfamily. In terms of assembly, monomer.

The protein resides in the cytoplasm. It catalyses the reaction tRNA(Glu) + L-glutamate + ATP = L-glutamyl-tRNA(Glu) + AMP + diphosphate. Functionally, catalyzes the attachment of glutamate to tRNA(Glu) in a two-step reaction: glutamate is first activated by ATP to form Glu-AMP and then transferred to the acceptor end of tRNA(Glu). The chain is Glutamate--tRNA ligase from Mycobacteroides abscessus (strain ATCC 19977 / DSM 44196 / CCUG 20993 / CIP 104536 / JCM 13569 / NCTC 13031 / TMC 1543 / L948) (Mycobacterium abscessus).